A 418-amino-acid chain; its full sequence is Probable serine/threonine-protein kinase DDB_G0280461 (418 aa).

One can recognise a Protein kinase domain in the interval 14 to 271 (KIEENEFSKG…IVQTLDQLAI (258 aa)). Residues 20-28 (FSKGSFAKV) and Lys41 contribute to the ATP site. Asp139 serves as the catalytic Proton acceptor. 2 disordered regions span residues 327 to 356 (NNNN…NNNN) and 377 to 418 (SVNS…CLIN). Residues 377–402 (SVNSSFSNSSLGSNGSNSSGTSTSSG) are compositionally biased toward low complexity. The span at 403 to 418 (GKKRSQKRKSWKCLIN) shows a compositional bias: basic residues.

It belongs to the protein kinase superfamily. TKL Ser/Thr protein kinase family.

It catalyses the reaction L-seryl-[protein] + ATP = O-phospho-L-seryl-[protein] + ADP + H(+). The enzyme catalyses L-threonyl-[protein] + ATP = O-phospho-L-threonyl-[protein] + ADP + H(+). This Dictyostelium discoideum (Social amoeba) protein is Probable serine/threonine-protein kinase DDB_G0280461.